The chain runs to 210 residues: Homeobox protein Rhox5 (210 aa).

A disordered region spans residues 29–117 (KAEAFLQAGE…KNGKPEDRQM (89 aa)). The homeobox; atypical DNA-binding region spans 117–175 (MPLQGSRFAQQRLSELQSILQRTNSFDVPREDLYRLMDTCVARVQNWFKIRRAAARRNR).

The protein localises to the nucleus. Functionally, transcription factor required for differentiation of embryonic stem cells (ESCs) into primordial germ cells. The protein is Homeobox protein Rhox5 (Rhox5) of Mus minutoides (Southern African pygmy mouse).